The following is a 727-amino-acid chain: DNA ligase (727 aa).

NAD(+) contacts are provided by residues 71–75 (DGEFD), 120–121 (SL), and Glu150. The active-site N6-AMP-lysine intermediate is the Lys152. NAD(+) contacts are provided by Arg173, Glu213, Lys329, and Lys353. The Zn(2+) site is built by Cys447, Cys450, Cys466, and Cys472. Positions 636–725 (SIERHLTGLS…PEAAAEAALP (90 aa)) constitute a BRCT domain.

This sequence belongs to the NAD-dependent DNA ligase family. LigA subfamily. Mg(2+) serves as cofactor. The cofactor is Mn(2+).

It catalyses the reaction NAD(+) + (deoxyribonucleotide)n-3'-hydroxyl + 5'-phospho-(deoxyribonucleotide)m = (deoxyribonucleotide)n+m + AMP + beta-nicotinamide D-nucleotide.. Functionally, DNA ligase that catalyzes the formation of phosphodiester linkages between 5'-phosphoryl and 3'-hydroxyl groups in double-stranded DNA using NAD as a coenzyme and as the energy source for the reaction. It is essential for DNA replication and repair of damaged DNA. The protein is DNA ligase of Saccharopolyspora erythraea (strain ATCC 11635 / DSM 40517 / JCM 4748 / NBRC 13426 / NCIMB 8594 / NRRL 2338).